A 379-amino-acid polypeptide reads, in one-letter code: Tubby-like F-box protein 7 (379 aa).

Residues 18–28 (FHQGETTTAPE) show a composition bias toward polar residues. Residues 18–41 (FHQGETTTAPESESIPPPSNMAGS) are disordered. The F-box domain maps to 42 to 97 (SSWSAMLPELLGEIIRRVEETEDRWPQRRDVVTCACVSKKWREITHDFARSSLNSG). 2 disordered regions span residues 193–212 (SQPP…RRFA) and 248–278 (TLRC…IMKK).

It belongs to the TUB family. In terms of tissue distribution, ubiquitous.

This chain is Tubby-like F-box protein 7, found in Arabidopsis thaliana (Mouse-ear cress).